A 170-amino-acid polypeptide reads, in one-letter code: Adenine phosphoribosyltransferase (170 aa).

The protein belongs to the purine/pyrimidine phosphoribosyltransferase family. Homodimer.

The protein resides in the cytoplasm. It carries out the reaction AMP + diphosphate = 5-phospho-alpha-D-ribose 1-diphosphate + adenine. The protein operates within purine metabolism; AMP biosynthesis via salvage pathway; AMP from adenine: step 1/1. Catalyzes a salvage reaction resulting in the formation of AMP, that is energically less costly than de novo synthesis. The sequence is that of Adenine phosphoribosyltransferase from Mesoplasma florum (strain ATCC 33453 / NBRC 100688 / NCTC 11704 / L1) (Acholeplasma florum).